We begin with the raw amino-acid sequence, 496 residues long: MCDVLTIRDLSKSFARNRVLNGVNFRMGKGAVVGLMGENGAGKSTLMKCLFGMYAKDTGQILVDGSPVDFQSPKEALENGVAMVHQELNQCLDRTVMDNLFLGRYPARFGIVDEKRMFDDSLTLFASLKMDVNPRAVMRSMSVSQRQMVEIAKAMSYNAKIIVLDEPTSSLTEREIVRLFAIIRDLSKKGVAFIYISHKMDEIFQICSEVIVLRDGVLTLSQSIGEVEMSDLITAMVGRTLDKRFPDADNTVGDDYLEIRGLSTRYAPQLRDISLSVKRGEIFGLYGLVGAGRSELLEAIFGLRTIADGEISLAGKKIRLKSSRDAMKLNFAFVPEERKLNGMFAKGSIEYNTTIANLPAYKRYGLLSKKKLQEAAEREIKAMRVKCVSPSELISALSGGNQQKVIIGKWLERDPDVLLLDEPTRGIDVGAKYEIYQLIIRMAREGKTIIVVSSEMPEILGITNRIAVMSNYRLAGIVDTKSTDQEALLRLSARYL.

2 consecutive ABC transporter domains span residues 5 to 240 and 243 to 496; these read LTIR…VGRT and KRFP…ARYL. Residue 37–44 coordinates ATP; it reads GENGAGKS.

The protein belongs to the ABC transporter superfamily. Galactose/methyl galactoside importer (TC 3.A.1.2.3) family. The complex is composed of one ATP-binding protein (MglA), two transmembrane proteins (MglC) and a solute-binding protein (MglB).

It localises to the cell inner membrane. The catalysed reaction is D-galactose(out) + ATP + H2O = D-galactose(in) + ADP + phosphate + H(+). It carries out the reaction methyl beta-D-galactoside(out) + ATP + H2O = methyl beta-D-galactoside(in) + ADP + phosphate + H(+). Part of the ABC transporter complex MglABC involved in galactose/methyl galactoside import. Responsible for energy coupling to the transport system. The protein is Galactose/methyl galactoside import ATP-binding protein MglA of Treponema pallidum (strain Nichols).